Here is a 926-residue protein sequence, read N- to C-terminus: LPS-assembly protein LptD (926 aa).

Positions Met1–Ala22 are cleaved as a signal peptide. Residues Val58–Gly99 are disordered. Positions Thr68 to Gly85 are enriched in low complexity.

Belongs to the LptD family. Component of the lipopolysaccharide transport and assembly complex. Interacts with LptE and LptA.

The protein localises to the cell outer membrane. Functionally, together with LptE, is involved in the assembly of lipopolysaccharide (LPS) at the surface of the outer membrane. This chain is LPS-assembly protein LptD, found in Pseudomonas savastanoi pv. phaseolicola (strain 1448A / Race 6) (Pseudomonas syringae pv. phaseolicola (strain 1448A / Race 6)).